The primary structure comprises 297 residues: MTTVIDGNEIGDQITEGVAACTDTLVSEGVTPGLATVLMSDDGASETYVSMKQRACNEIGIEGFHHQISADESAEALFSTIDELNADPAVHGILVQMPVPDHVPKRDVLERIDPMKDVDGFHPENVGRLVAGNARYKPCTPHGIQKMLAETGVVTEGKDVVVVGRSDIVGKPMANLLIQYGPGGNATTTVCHSRTDDLADKTRNADIVIAAAGVPEMIDGSMLSAGTTVIDVGINRVDADTEKGYELVGDVDFESAKEKADAITPVPGGVGPLTIAMLLYNTVKAASLQSGVDIRLP.

NADP(+)-binding positions include 164-166, Ser193, and Ile234; that span reads GRS.

It belongs to the tetrahydrofolate dehydrogenase/cyclohydrolase family. Homodimer.

It carries out the reaction (6R)-5,10-methylene-5,6,7,8-tetrahydrofolate + NADP(+) = (6R)-5,10-methenyltetrahydrofolate + NADPH. The enzyme catalyses (6R)-5,10-methenyltetrahydrofolate + H2O = (6R)-10-formyltetrahydrofolate + H(+). The protein operates within one-carbon metabolism; tetrahydrofolate interconversion. Its function is as follows. Catalyzes the oxidation of 5,10-methylenetetrahydrofolate to 5,10-methenyltetrahydrofolate and then the hydrolysis of 5,10-methenyltetrahydrofolate to 10-formyltetrahydrofolate. The protein is Bifunctional protein FolD 2 of Haloarcula marismortui (strain ATCC 43049 / DSM 3752 / JCM 8966 / VKM B-1809) (Halobacterium marismortui).